The following is a 281-amino-acid chain: ATP synthase gamma chain (281 aa).

It belongs to the ATPase gamma chain family. In terms of assembly, F-type ATPases have 2 components, CF(1) - the catalytic core - and CF(0) - the membrane proton channel. CF(1) has five subunits: alpha(3), beta(3), gamma(1), delta(1), epsilon(1). CF(0) has three main subunits: a, b and c.

Its subcellular location is the cell inner membrane. In terms of biological role, produces ATP from ADP in the presence of a proton gradient across the membrane. The gamma chain is believed to be important in regulating ATPase activity and the flow of protons through the CF(0) complex. The sequence is that of ATP synthase gamma chain from Ehrlichia canis (strain Jake).